A 60-amino-acid polypeptide reads, in one-letter code: Single-pass membrane and coiled-coil domain-containing protein 4 homolog (60 aa).

A disordered region spans residues M1–E22. The span at Q8 to E22 shows a compositional bias: basic and acidic residues. The stretch at Q8–V34 forms a coiled coil. Residues L30–F50 traverse the membrane as a helical segment.

The protein belongs to the SMCO4 family.

The protein resides in the membrane. This chain is Single-pass membrane and coiled-coil domain-containing protein 4 homolog, found in Culex quinquefasciatus (Southern house mosquito).